The chain runs to 265 residues: Aliphatic sulfonates import ATP-binding protein SsuB 1 (265 aa).

In terms of domain architecture, ABC transporter spans 31–255 (FAFKGVEKRF…RRGSAELARL (225 aa)). ATP is bound at residue 63-70 (GKSGCGKS).

The protein belongs to the ABC transporter superfamily. Aliphatic sulfonates importer (TC 3.A.1.17.2) family. The complex is composed of two ATP-binding proteins (SsuB), two transmembrane proteins (SsuC) and a solute-binding protein (SsuA).

The protein resides in the cell inner membrane. The enzyme catalyses ATP + H2O + aliphatic sulfonate-[sulfonate-binding protein]Side 1 = ADP + phosphate + aliphatic sulfonateSide 2 + [sulfonate-binding protein]Side 1.. In terms of biological role, part of the ABC transporter complex SsuABC involved in aliphatic sulfonates import. Responsible for energy coupling to the transport system. In Mesorhizobium japonicum (strain LMG 29417 / CECT 9101 / MAFF 303099) (Mesorhizobium loti (strain MAFF 303099)), this protein is Aliphatic sulfonates import ATP-binding protein SsuB 1.